The chain runs to 288 residues: Pantothenate synthetase (288 aa).

Position 30–37 (30–37 (MGFLHEGH)) interacts with ATP. H37 functions as the Proton donor in the catalytic mechanism. Q61 contacts (R)-pantoate. Q61 contacts beta-alanine. 147–150 (GMKD) is an ATP binding site. Residue Q153 coordinates (R)-pantoate. 184-187 (KSSR) lines the ATP pocket.

It belongs to the pantothenate synthetase family. In terms of assembly, homodimer.

It localises to the cytoplasm. It catalyses the reaction (R)-pantoate + beta-alanine + ATP = (R)-pantothenate + AMP + diphosphate + H(+). Its pathway is cofactor biosynthesis; (R)-pantothenate biosynthesis; (R)-pantothenate from (R)-pantoate and beta-alanine: step 1/1. In terms of biological role, catalyzes the condensation of pantoate with beta-alanine in an ATP-dependent reaction via a pantoyl-adenylate intermediate. The sequence is that of Pantothenate synthetase from Bacillus licheniformis (strain ATCC 14580 / DSM 13 / JCM 2505 / CCUG 7422 / NBRC 12200 / NCIMB 9375 / NCTC 10341 / NRRL NRS-1264 / Gibson 46).